The sequence spans 78 residues: uncharacterized protein (78 aa).

The tract at residues Q49–L78 is disordered. Over residues E54–Q65 the composition is skewed to polar residues. Basic and acidic residues predominate over residues R68–L78.

This is an uncharacterized protein from Saccharomyces cerevisiae (strain ATCC 204508 / S288c) (Baker's yeast).